A 334-amino-acid polypeptide reads, in one-letter code: NH(3)-dependent NAD(+) synthetase (334 aa).

An ATP-binding site is contributed by 47–54 (GLSGGIDS). Aspartate 53 provides a ligand contact to Mg(2+). Arginine 183 serves as a coordination point for deamido-NAD(+). Threonine 203 is an ATP binding site. A Mg(2+)-binding site is contributed by glutamate 208. Residues lysine 216 and aspartate 223 each contribute to the deamido-NAD(+) site. Residues lysine 232 and threonine 254 each contribute to the ATP site.

It belongs to the NAD synthetase family. In terms of assembly, homodimer.

The enzyme catalyses deamido-NAD(+) + NH4(+) + ATP = AMP + diphosphate + NAD(+) + H(+). It functions in the pathway cofactor biosynthesis; NAD(+) biosynthesis; NAD(+) from deamido-NAD(+) (ammonia route): step 1/1. Functionally, catalyzes the ATP-dependent amidation of deamido-NAD to form NAD. Uses ammonia as a nitrogen source. This chain is NH(3)-dependent NAD(+) synthetase, found in Rhizobium meliloti (strain 1021) (Ensifer meliloti).